Consider the following 265-residue polypeptide: tRNA (guanine-N(7)-)-methyltransferase (265 aa).

The tract at residues 1 to 40 (MIHDDDPNAPGAPHDDDATAAPASATRAAPAAGDDDDANP) is disordered. Residues 19–32 (TAAPASATRAAPAA) show a composition bias toward low complexity. Residues Glu95, Glu120, Asp147, and Asp170 each contribute to the S-adenosyl-L-methionine site. The active site involves Asp170. Substrate contacts are provided by residues Lys174, Asp206, and 241–244 (TKFE).

It belongs to the class I-like SAM-binding methyltransferase superfamily. TrmB family.

The enzyme catalyses guanosine(46) in tRNA + S-adenosyl-L-methionine = N(7)-methylguanosine(46) in tRNA + S-adenosyl-L-homocysteine. The protein operates within tRNA modification; N(7)-methylguanine-tRNA biosynthesis. Its function is as follows. Catalyzes the formation of N(7)-methylguanine at position 46 (m7G46) in tRNA. The sequence is that of tRNA (guanine-N(7)-)-methyltransferase from Burkholderia pseudomallei (strain 1710b).